The sequence spans 312 residues: Pantothenate kinase (312 aa).

Position 97–104 (97–104 (GSVAVGKS)) interacts with ATP.

It belongs to the prokaryotic pantothenate kinase family.

The protein resides in the cytoplasm. It catalyses the reaction (R)-pantothenate + ATP = (R)-4'-phosphopantothenate + ADP + H(+). Its pathway is cofactor biosynthesis; coenzyme A biosynthesis; CoA from (R)-pantothenate: step 1/5. The sequence is that of Pantothenate kinase (coaA) from Mycobacterium leprae (strain TN).